The chain runs to 641 residues: Leucine-rich repeat receptor-like serine/threonine/tyrosine-protein kinase SOBIR1 (641 aa).

A signal peptide spans 1-31; it reads MAVPTGSANLFLRPLILAVLSFLLLSSFVSS. Topologically, residues 32–284 are extracellular; it reads VEWLDIDSSD…KKKKSKKKKV (253 aa). LRR repeat units lie at residues 112 to 133, 136 to 159, 160 to 182, 183 to 205, and 207 to 228; these read ELKELTLSNNQLVNAVPVDILS, QLEVLDLRKNRFSGQIPGNFSSLS, RLRILDLSSNKLSGNLNFLKNLR, NLENLSVANNLFSGKIPEQIVSF, and NLRFFDFSGNRYLEGPAPVMSS. Asparagine 154 is a glycosylation site (N-linked (GlcNAc...) asparagine). N-linked (GlcNAc...) asparagine glycosylation occurs at asparagine 186. The interval 243–278 is disordered; the sequence is AETPTSSPTNKPNNSTTSKAPKGAPKPGKLKKKKKK. A compositionally biased stretch (polar residues) spans 245–259; that stretch reads TPTSSPTNKPNNSTT. Residue asparagine 256 is glycosylated (N-linked (GlcNAc...) asparagine). Low complexity predominate over residues 260 to 269; that stretch reads SKAPKGAPKP. Residues 285 to 305 form a helical membrane-spanning segment; the sequence is AAWILGFVVGAIGGTISGFVF. The Cytoplasmic segment spans residues 306–641; that stretch reads SVLFKLIIQA…VRTMLSQIKH (336 aa). The Protein kinase domain maps to 347 to 641; sequence LASLEIIGRG…VRTMLSQIKH (295 aa). Residues 353–361 and lysine 377 contribute to the ATP site; that span reads IGRGGCGEV. The Proton acceptor role is filled by aspartate 489.

The protein belongs to the protein kinase superfamily. Ser/Thr protein kinase family. In terms of assembly, interacts with CST. Interacts with RLP23. Component of a trimeric complex composed of RLP23, SOBIR1 and BAK1. BAK1 is recruited into a pre-formed RLP23-SOBIR1 complex in a ligand-dependent manner. Post-translationally, autophosphorylated on Ser, Thr and Tyr residues. As to expression, mostly present in leaves and flowers, with increasing expression in older flowers.

The protein localises to the cell membrane. The catalysed reaction is L-seryl-[protein] + ATP = O-phospho-L-seryl-[protein] + ADP + H(+). The enzyme catalyses L-threonyl-[protein] + ATP = O-phospho-L-threonyl-[protein] + ADP + H(+). It catalyses the reaction L-tyrosyl-[protein] + ATP = O-phospho-L-tyrosyl-[protein] + ADP + H(+). Dual specificity kinase acting on both serine/threonine- and tyrosine-containing substrates. Acting as a counterplayer of BIR1, promotes the activation of plant defense and cell death. Component of the RLP23-SOBIR1-BAK1 complex that mediates NLP-triggered immunity. Functions as an inhibitor/regulator of abscission, probably by regulating membrane trafficking during abscission. The protein is Leucine-rich repeat receptor-like serine/threonine/tyrosine-protein kinase SOBIR1 (SOBIR1) of Arabidopsis thaliana (Mouse-ear cress).